The chain runs to 477 residues: Glycogen synthase (477 aa).

Lys15 contributes to the ADP-alpha-D-glucose binding site.

The protein belongs to the glycosyltransferase 1 family. Bacterial/plant glycogen synthase subfamily.

It catalyses the reaction [(1-&gt;4)-alpha-D-glucosyl](n) + ADP-alpha-D-glucose = [(1-&gt;4)-alpha-D-glucosyl](n+1) + ADP + H(+). It functions in the pathway glycan biosynthesis; glycogen biosynthesis. In terms of biological role, synthesizes alpha-1,4-glucan chains using ADP-glucose. The chain is Glycogen synthase (glgA) from Salmonella typhimurium (strain LT2 / SGSC1412 / ATCC 700720).